Consider the following 56-residue polypeptide: Large ribosomal subunit protein bL32 (56 aa).

A disordered region spans residues 1–36 (MAVQQNKKSRSKRGMRRSHDALSTAQLSVDATSGEV). Residues 7 to 16 (KKSRSKRGMR) show a composition bias toward basic residues. Over residues 21 to 31 (ALSTAQLSVDA) the composition is skewed to polar residues.

The protein belongs to the bacterial ribosomal protein bL32 family.

This chain is Large ribosomal subunit protein bL32, found in Shewanella oneidensis (strain ATCC 700550 / JCM 31522 / CIP 106686 / LMG 19005 / NCIMB 14063 / MR-1).